The chain runs to 450 residues: Beta-glucosidase (450 aa).

The active-site Proton donor is the Glu-166. The active-site Nucleophile is Glu-355.

This sequence belongs to the glycosyl hydrolase 1 family.

The enzyme catalyses Hydrolysis of terminal, non-reducing beta-D-glucosyl residues with release of beta-D-glucose.. This Niallia circulans (Bacillus circulans) protein is Beta-glucosidase (bglA).